The chain runs to 137 residues: Large ribosomal subunit protein uL16 (137 aa).

Belongs to the universal ribosomal protein uL16 family. As to quaternary structure, part of the 50S ribosomal subunit.

Its function is as follows. Binds 23S rRNA and is also seen to make contacts with the A and possibly P site tRNAs. The chain is Large ribosomal subunit protein uL16 from Xanthomonas axonopodis pv. citri (strain 306).